Consider the following 253-residue polypeptide: 2-succinyl-6-hydroxy-2,4-cyclohexadiene-1-carboxylate synthase (253 aa).

Positions 11 to 147 (PWLVCLHGLF…PEALQDWYQQ (137 aa)) constitute an AB hydrolase-1 domain.

The protein belongs to the AB hydrolase superfamily. MenH family. As to quaternary structure, monomer.

The enzyme catalyses 5-enolpyruvoyl-6-hydroxy-2-succinyl-cyclohex-3-ene-1-carboxylate = (1R,6R)-6-hydroxy-2-succinyl-cyclohexa-2,4-diene-1-carboxylate + pyruvate. It functions in the pathway quinol/quinone metabolism; 1,4-dihydroxy-2-naphthoate biosynthesis; 1,4-dihydroxy-2-naphthoate from chorismate: step 3/7. Its pathway is quinol/quinone metabolism; menaquinone biosynthesis. Functionally, catalyzes a proton abstraction reaction that results in 2,5-elimination of pyruvate from 2-succinyl-5-enolpyruvyl-6-hydroxy-3-cyclohexene-1-carboxylate (SEPHCHC) and the formation of 2-succinyl-6-hydroxy-2,4-cyclohexadiene-1-carboxylate (SHCHC). The protein is 2-succinyl-6-hydroxy-2,4-cyclohexadiene-1-carboxylate synthase of Pectobacterium atrosepticum (strain SCRI 1043 / ATCC BAA-672) (Erwinia carotovora subsp. atroseptica).